A 975-amino-acid polypeptide reads, in one-letter code: Ionotropic receptor 21a (975 aa).

A signal peptide spans 1–21; that stretch reads MFKRIVLAVINLVFLIVSTTA. N-linked (GlcNAc...) asparagine glycans are attached at residues N67, N177, and N355. Residues 433–453 traverse the membrane as a helical segment; it reads WPVWVAVILIYLLAIFPLAFS. A glycan (N-linked (GlcNAc...) asparagine) is linked at N464. A helical transmembrane segment spans residues 505-525; it reads IYWVFTIIITACYTGSIIAFI. 3 N-linked (GlcNAc...) asparagine glycosylation sites follow: N561, N586, and N611. The chain crosses the membrane as a helical span at residues 708–728; sequence MFLLMLFGYVVALGVLISEWV. Disordered stretches follow at residues 757–839 and 911–938; these read ATAG…HSLS and SPHSARADESSDAGGLVRRGAGRERKEM. 2 stretches are compositionally biased toward polar residues: residues 760 to 777 and 788 to 800; these read GSDNGSLPVSSPTSTNRN and VENSLPASGNGSA. Residues N763 and N797 are each glycosylated (N-linked (GlcNAc...) asparagine).

It belongs to the glutamate-gated ion channel (TC 1.A.10.1) family. In terms of tissue distribution, in both female and male antenna, expressed specifically in 3 sensory neurons of flagellomere 13 segment (at protein level).

Its subcellular location is the cell projection. The protein localises to the cilium membrane. Integral part of a neural sensory system in the antenna that provides the neural basis for the response to environmental changes in temperature (thermosensation). Specifically, required for thermosensing by the cooling cell. Plays a role in heat seeking and heat-stimulated blood feeding behavior. The protein is Ionotropic receptor 21a of Anopheles gambiae (African malaria mosquito).